The following is a 121-amino-acid chain: MRPTVILTCAAAAHAQIFGNFFNQMLKKEFAVEESWHNQEYHKVSCDNGHVCPDTLTCVNSPLECPCQFPASEIKCVYPDKSGYVCISKPGDGYDGSDASSKAEDGKRDCAWVNKAFRGEL.

Positions 1-15 (MRPTVILTCAAAAHA) are cleaved as a signal peptide.

It belongs to the LCL2 family.

Its function is as follows. Probable component of the endoplasmic reticulum-associated degradation (ERAD) pathway. This Yarrowia lipolytica (strain CLIB 122 / E 150) (Yeast) protein is Long chronological lifespan protein 2 (LCL2).